The primary structure comprises 340 residues: KKKSGIAMCVGCGSQIHDQYILRVAPDLEWHAACLKCSECSQYLDETCTCFVRDGKTYCKRDYVRLFGIKCAKCNIGFCSSDLVMRARDNVYHMECFRCSVCSRQLVPGDEFSLRDEELLCRADHGLLLERASAGSPISPGNILSRSFHIADPVSVRQPPHRNHVHKQSEKTTRVRTVLNEKQLHTLRTCYNANPRPDALMKEQLVEMTGLSPRVIRVWFQNKRCKDKKRTIFMKQLQQQHHIDKTNLQGLTGTPMVAGSPIRHDNTVLGNPVEVQTYQPPWKALSEFALQSDLDQPAFRQLVSFSESGSMGNSSGSDVTSLSSQLPDTPNSMVPSPMDT.

2 LIM zinc-binding domains span residues 9–62 (CVGC…CKRD) and 71–125 (CAKC…RADH). The segment at residues 172–231 (TTRVRTVLNEKQLHTLRTCYNANPRPDALMKEQLVEMTGLSPRVIRVWFQNKRCKDKKRT) is a DNA-binding region (homeobox). Residues 307–317 (ESGSMGNSSGS) are compositionally biased toward low complexity. The tract at residues 307–340 (ESGSMGNSSGSDVTSLSSQLPDTPNSMVPSPMDT) is disordered. A compositionally biased stretch (polar residues) spans 318 to 340 (DVTSLSSQLPDTPNSMVPSPMDT).

The protein localises to the nucleus. Binds to one of the cis-acting domain of the insulin gene enhancer. May be involved in subtype specialization of primary motoneurons. The polypeptide is Insulin gene enhancer protein ISL-2B (isl2b) (Oncorhynchus tshawytscha (Chinook salmon)).